The sequence spans 328 residues: Probable magnesium transporter NIPA6 (328 aa).

Residues 1 to 4 are Extracellular-facing; sequence METD. The chain crosses the membrane as a helical span at residues 5 to 25; that stretch reads NGKGLILAVASSVFIGSSFIL. Residues 26–51 lie on the Cytoplasmic side of the membrane; the sequence is KKKGLKRAGAIGTRAGYGGYTYLLEP. Residues 52–72 traverse the membrane as a helical segment; it reads LWWAGMVTMIVGEAANFVAYI. Residues 73–76 lie on the Extracellular side of the membrane; it reads YAPA. A helical transmembrane segment spans residues 77 to 97; the sequence is VLVTPLGALSIIISAVLAHFL. Residues 98 to 104 lie on the Cytoplasmic side of the membrane; it reads LKEKLKK. The chain crosses the membrane as a helical span at residues 105–125; the sequence is MGVLGCVSCIVGSVVIVIHAP. The Extracellular portion of the chain corresponds to 126–142; it reads KEQTPNSVEEIWNLATQ. Residues 143-163 form a helical membrane-spanning segment; it reads PAFLIYVAITMSIVLALILHF. Over 164–175 the chain is Cytoplasmic; the sequence is EPLCGQTNILVY. Residues 176 to 196 form a helical membrane-spanning segment; that stretch reads IGICSLMGALTVMSIKAIGIA. Topologically, residues 197-209 are extracellular; the sequence is IKLTMEGVSQIGY. The helical transmembrane segment at 210-230 threads the bilayer; sequence PQTWLFVMVAVTCVVTQLIYL. At 231-240 the chain is on the cytoplasmic side; it reads NKALDTFNAA. A helical transmembrane segment spans residues 241–261; sequence IVSPVYYVMFTTLTIVASAIM. The Extracellular segment spans residues 262 to 269; the sequence is FKDWSGQD. A helical membrane pass occupies residues 270-290; it reads AASVASELCGFITVLTGTMIL. At 291-328 the chain is on the cytoplasmic side; the sequence is HGTREEEQQQASSEHVRWYDSRKSMNEEHLVSLYSPEY.

Belongs to the NIPA (TC 2.A.7) family. Homodimer.

It is found in the cell membrane. The protein resides in the early endosome. Functionally, acts as a Mg(2+) transporter. Can also transport other divalent cations such as Fe(2+), Sr(2+), Ba(2+), Mn(2+) and Co(2+) but to a much less extent than Mg(2+). The polypeptide is Probable magnesium transporter NIPA6 (Arabidopsis thaliana (Mouse-ear cress)).